The following is a 326-amino-acid chain: Ribosomal large subunit pseudouridine synthase D (326 aa).

The S4 RNA-binding domain occupies 18–91; the sequence is QRLDQALAEM…IPLDIVYEDE (74 aa). The active site involves D139.

This sequence belongs to the pseudouridine synthase RluA family.

It localises to the cytoplasm. The enzyme catalyses uridine(1911/1915/1917) in 23S rRNA = pseudouridine(1911/1915/1917) in 23S rRNA. Responsible for synthesis of pseudouridine from uracil at positions 1911, 1915 and 1917 in 23S ribosomal RNA. This is Ribosomal large subunit pseudouridine synthase D (rluD) from Shigella flexneri.